Reading from the N-terminus, the 766-residue chain is Protein sak1 (766 aa).

The RFX-type winged-helix DNA-binding region spans 101 to 176 (GICWLKRACE…YHYCGIKLRG (76 aa)). Phosphoserine occurs at positions 223, 224, and 227. 2 disordered regions span residues 271-308 (PQAHPLPSHLSQSNVPPQLSHSSVPSPAPPRSVSQPTY) and 708-731 (LQEHRQSQQHFQQDIEALQSQQQQ). Residues 279–289 (HLSQSNVPPQL) are compositionally biased toward polar residues. 2 stretches are compositionally biased toward low complexity: residues 290 to 308 (SHSSVPSPAPPRSVSQPTY) and 715 to 731 (QQHFQQDIEALQSQQQQ).

This sequence belongs to the RFX family.

It localises to the nucleus. Functionally, positively regulates cyclic AMP-dependent protein kinase-mediated exit from the mitotic cell cycle. This is Protein sak1 (sak1) from Schizosaccharomyces pombe (strain 972 / ATCC 24843) (Fission yeast).